The chain runs to 332 residues: 3-dehydrosphinganine reductase (332 aa).

Residues 1 to 25 (MLLVVAAFIVAFVLLLYMISPLISP) form the signal peptide. Residues G39, S41, S42, G43, R64, D65, K68, and D93 each coordinate NADPH. Positions 39 to 43 (GGSSG) match the GXSXG motif. S172 serves as the catalytic Proton donor. Residue Y186 is the Proton acceptor of the active site. NADP(+) contacts are provided by Y186 and K190. The active-site Lowers pKa of active site Tyr is the K190.

It belongs to the short-chain dehydrogenases/reductases (SDR) family.

The protein localises to the endoplasmic reticulum. It carries out the reaction sphinganine + NADP(+) = 3-oxosphinganine + NADPH + H(+). Its pathway is lipid metabolism; sphingolipid metabolism. Catalyzes the reduction of 3'-oxosphinganine (3-ketodihydrosphingosine/KDS) to sphinganine (dihydrosphingosine/DHS), the second step of de novo sphingolipid biosynthesis. The polypeptide is 3-dehydrosphinganine reductase (kdsr) (Danio rerio (Zebrafish)).